We begin with the raw amino-acid sequence, 414 residues long: Histidine--tRNA ligase (414 aa).

The protein belongs to the class-II aminoacyl-tRNA synthetase family. In terms of assembly, homodimer.

Its subcellular location is the cytoplasm. It carries out the reaction tRNA(His) + L-histidine + ATP = L-histidyl-tRNA(His) + AMP + diphosphate + H(+). This is Histidine--tRNA ligase from Anaeromyxobacter dehalogenans (strain 2CP-1 / ATCC BAA-258).